Here is a 700-residue protein sequence, read N- to C-terminus: Acetoacetyl-CoA synthetase (700 aa).

Residues 1–35 (MTAVSANGKTTEKHENGAHTNGTTNGTTNGSMNGN) form a disordered region. Over residues 18-35 (AHTNGTTNGTTNGSMNGN) the composition is skewed to low complexity.

This sequence belongs to the ATP-dependent AMP-binding enzyme family. Present in most cells of the organism.

The protein localises to the cytoplasm. It localises to the nucleus. It catalyses the reaction acetoacetate + ATP + CoA = acetoacetyl-CoA + AMP + diphosphate. Functionally, activates acetoacetate to acetoacetyl-CoA. Negatively regulates let-60 Ras activity during vulval induction. This chain is Acetoacetyl-CoA synthetase (sur-5), found in Caenorhabditis elegans.